The chain runs to 133 residues: Large ribosomal subunit protein eL14 (133 aa).

It belongs to the eukaryotic ribosomal protein eL14 family.

This chain is Large ribosomal subunit protein eL14, found in Pisum sativum (Garden pea).